Consider the following 122-residue polypeptide: Small ribosomal subunit protein uS13 (122 aa).

Positions 95–122 (GLPVRGQKTKTNARTRKGPKRTVANKKK) are disordered.

This sequence belongs to the universal ribosomal protein uS13 family. As to quaternary structure, part of the 30S ribosomal subunit. Forms a loose heterodimer with protein S19. Forms two bridges to the 50S subunit in the 70S ribosome.

Its function is as follows. Located at the top of the head of the 30S subunit, it contacts several helices of the 16S rRNA. In the 70S ribosome it contacts the 23S rRNA (bridge B1a) and protein L5 of the 50S subunit (bridge B1b), connecting the 2 subunits; these bridges are implicated in subunit movement. Contacts the tRNAs in the A and P-sites. The polypeptide is Small ribosomal subunit protein uS13 (Agathobacter rectalis (strain ATCC 33656 / DSM 3377 / JCM 17463 / KCTC 5835 / VPI 0990) (Eubacterium rectale)).